A 970-amino-acid chain; its full sequence is Protein translocase subunit SecA (970 aa).

ATP is bound by residues Q99, 117 to 121 (GEGKT), and D631.

Belongs to the SecA family. Monomer and homodimer. Part of the essential Sec protein translocation apparatus which comprises SecA, SecYEG and auxiliary proteins SecDF. Other proteins may also be involved.

Its subcellular location is the cell inner membrane. It is found in the cytoplasm. It carries out the reaction ATP + H2O + cellular proteinSide 1 = ADP + phosphate + cellular proteinSide 2.. Its function is as follows. Part of the Sec protein translocase complex. Interacts with the SecYEG preprotein conducting channel. Has a central role in coupling the hydrolysis of ATP to the transfer of proteins into and across the cell membrane, serving as an ATP-driven molecular motor driving the stepwise translocation of polypeptide chains across the membrane. In Chlamydia caviae (strain ATCC VR-813 / DSM 19441 / 03DC25 / GPIC) (Chlamydophila caviae), this protein is Protein translocase subunit SecA.